A 136-amino-acid chain; its full sequence is ATP synthase F(0) complex subunit C1, mitochondrial (136 aa).

The N-terminal 61 residues, 1–61 (MQTTKALLIS…REFQTSVISR (61 aa)), are a transit peptide targeting the mitochondrion. The chain crosses the membrane as a helical span at residues 77–97 (VGVAGSGAGIGTVFGSLIIGY). Lys-104 bears the N6,N6,N6-trimethyllysine mark. The helical transmembrane segment at 112 to 132 (ILGFALSEAMGLFCLMVAFLI) threads the bilayer.

Belongs to the ATPase C chain family. Homooctamer; the c-ring consists of eight c subunits forming a circle, and each subunit adopts a hairpin shape. Component of the ATP synthase complex composed at least of ATP5F1A/subunit alpha, ATP5F1B/subunit beta, ATP5MC1/subunit c (homooctomer), MT-ATP6/subunit a, MT-ATP8/subunit 8, ATP5ME/subunit e, ATP5MF/subunit f, ATP5MG/subunit g, ATP5MK/subunit k, ATP5MJ/subunit j, ATP5F1C/subunit gamma, ATP5F1D/subunit delta, ATP5F1E/subunit epsilon, ATP5PF/subunit F6, ATP5PB/subunit b, ATP5PD/subunit d, ATP5PO/subunit OSCP. ATP synthase complex consists of a soluble F(1) head domain (subunits alpha(3) and beta(3)) - the catalytic core - and a membrane F(0) domain - the membrane proton channel (subunits c, a, 8, e, f, g, k and j). These two domains are linked by a central stalk (subunits gamma, delta, and epsilon) rotating inside the F1 region and a stationary peripheral stalk (subunits F6, b, d, and OSCP). Interacts with TMEM70 (homooligomer form); this interaction facilitates the oligomer formation of subunit c/ATP5MC1 (c-ring) and the c-ring membrane insertion and also protects ATP5MC1 against intramitochondrial proteolysis. Trimethylated by ATPSCKMT at Lys-104. Methylation is required for proper incorporation of the C subunit into the ATP synthase complex and mitochondrial respiration.

It is found in the mitochondrion membrane. It catalyses the reaction H(+)(in) = H(+)(out). In terms of biological role, subunit c, of the mitochondrial membrane ATP synthase complex (F(1)F(0) ATP synthase or Complex V) that produces ATP from ADP in the presence of a proton gradient across the membrane which is generated by electron transport complexes of the respiratory chain. ATP synthase complex consist of a soluble F(1) head domain - the catalytic core - and a membrane F(1) domain - the membrane proton channel. These two domains are linked by a central stalk rotating inside the F(1) region and a stationary peripheral stalk. During catalysis, ATP synthesis in the catalytic domain of F(1) is coupled via a rotary mechanism of the central stalk subunits to proton translocation. With the subunit a (MT-ATP6), forms the proton-conducting channel in the F(0) domain, that contains two crucial half-channels (inlet and outlet) that facilitate proton movement from the mitochondrial intermembrane space (IMS) into the matrix. Protons are taken up via the inlet half-channel and released through the outlet half-channel, following a Grotthuss mechanism. The chain is ATP synthase F(0) complex subunit C1, mitochondrial from Rattus norvegicus (Rat).